Here is a 106-residue protein sequence, read N- to C-terminus: Glutaredoxin-1 (106 aa).

Position 2 is an N-acetylalanine (Ala2). In terms of domain architecture, Glutaredoxin spans 3 to 106 (QEFVNCKIQP…TRLKQIGALQ (104 aa)). Lys9 carries the post-translational modification N6-succinyllysine. Disulfide bonds link Cys23-Cys26 and Cys79-Cys83.

Belongs to the glutaredoxin family.

The protein resides in the cytoplasm. Has a glutathione-disulfide oxidoreductase activity in the presence of NADPH and glutathione reductase. Reduces low molecular weight disulfides and proteins. The chain is Glutaredoxin-1 (GLRX) from Homo sapiens (Human).